The chain runs to 389 residues: Leucine aminopeptidase 1 (389 aa).

An N-terminal signal peptide occupies residues 1–19; it reads MKLPALLTLGVAASTMVLA. The propeptide occupies 20-88; it reads AIAPDQVPLN…LPKVFPTPAV (69 aa). N96, N119, N149, N164, and N181 each carry an N-linked (GlcNAc...) asparagine glycan. Positions 189 and 208 each coordinate Zn(2+). Residue N233 is glycosylated (N-linked (GlcNAc...) asparagine). Residues E247 and D274 each contribute to the Zn(2+) site. Residues C323 and C327 are joined by a disulfide bond. H356 serves as a coordination point for Zn(2+).

It belongs to the peptidase M28 family. M28E subfamily. Monomer. Zn(2+) is required as a cofactor.

It localises to the secreted. Functionally, extracellular aminopeptidase that allows assimilation of proteinaceous substrates. The sequence is that of Leucine aminopeptidase 1 (LAP1) from Paracoccidioides brasiliensis (strain Pb18).